A 222-amino-acid polypeptide reads, in one-letter code: 3-dehydroquinate dehydratase (222 aa).

Residues 32–34 (ELR) and R64 contribute to the 3-dehydroquinate site. H117 acts as the Proton donor/acceptor in catalysis. The active-site Schiff-base intermediate with substrate is K143. R181 contacts 3-dehydroquinate.

It belongs to the type-I 3-dehydroquinase family. In terms of assembly, homodimer.

The catalysed reaction is 3-dehydroquinate = 3-dehydroshikimate + H2O. It participates in metabolic intermediate biosynthesis; chorismate biosynthesis; chorismate from D-erythrose 4-phosphate and phosphoenolpyruvate: step 3/7. In terms of biological role, involved in the third step of the chorismate pathway, which leads to the biosynthesis of aromatic amino acids. Catalyzes the cis-dehydration of 3-dehydroquinate (DHQ) and introduces the first double bond of the aromatic ring to yield 3-dehydroshikimate. The sequence is that of 3-dehydroquinate dehydratase from Aeropyrum pernix (strain ATCC 700893 / DSM 11879 / JCM 9820 / NBRC 100138 / K1).